We begin with the raw amino-acid sequence, 218 residues long: Flagellin B1 (218 aa).

Residues 1-12 (MNIKEFLSNKKG) constitute a propeptide that is removed on maturation. Asn38, Asn71, Asn77, Asn115, and Asn136 each carry an N-linked (GlcNAc...) asparagine glycan.

It belongs to the archaeal flagellin family. Post-translationally, N-linked glycans consist of the 779 Da trisaccharide beta-ManNAc(Thr)-(1-4)-beta-GlcNAc3NAcA-(1-3)-beta-GlcNAc.

It localises to the archaeal flagellum. Its function is as follows. Flagellin is the subunit protein which polymerizes to form the filaments of archaeal flagella. This is Flagellin B1 (flaB1) from Methanococcus voltae.